The chain runs to 202 residues: B-cell CLL/lymphoma 7 protein family member B (202 aa).

The interval 53–202 (DSKEKEKSKS…PTVPQTASES (150 aa)) is disordered. Over residues 90–99 (ENSNQSSVSD) the composition is skewed to polar residues. Low complexity predominate over residues 107–123 (SSTNSSPSPQQSESLSP). A phosphoserine mark is found at serine 114, serine 118, serine 120, serine 122, serine 127, serine 148, and serine 152.

This sequence belongs to the BCL7 family. Ubiquitous.

Its function is as follows. Positive regulator of apoptosis. Plays a role in the Wnt signaling pathway, negatively regulating the expression of Wnt signaling components CTNNB1 and HMGA1. Involved in cell cycle progression, maintenance of the nuclear structure and stem cell differentiation. May play a role in lung tumor development or progression. This Homo sapiens (Human) protein is B-cell CLL/lymphoma 7 protein family member B (BCL7B).